A 361-amino-acid polypeptide reads, in one-letter code: MKNLFLFCRAGYEKECAAEIQQRAAELNVGGFVKANNNDAYVVYQCFEEDGGDTLVKQLPLDSLIFARQMFAASELLADLPESDRVSPIVAALSEVSKAGELRVETPDTNEAKELSAFCRKFTVPLRQHLKKSGSLLAQENPKRPIIHVCFIGPGRAYVGYSFSNNSSPYFMGIPRLKMAADAPSRSSLKLDEAFAQFVPKEEQEVRVRSGMNAVDLGACPGGWTYQLVRRGMMVSAVDNGPMNEKLMETGQVKHFREDGFRFEPQRKNIYWLVCDMVEKPARVAELIEAWAINGWFKEAIFNLKLPMKSRYKEVMAILNTMQEILKENGINEFQLQCKHLYHDRDEVTVHLWIRPSQAWN.

Residues serine 187, 220–223 (CPGG), aspartate 239, aspartate 259, and aspartate 276 contribute to the S-adenosyl-L-methionine site. The active-site Proton acceptor is the lysine 305.

Belongs to the class I-like SAM-binding methyltransferase superfamily. RNA methyltransferase RlmE family. RlmM subfamily. As to quaternary structure, monomer.

The protein localises to the cytoplasm. It carries out the reaction cytidine(2498) in 23S rRNA + S-adenosyl-L-methionine = 2'-O-methylcytidine(2498) in 23S rRNA + S-adenosyl-L-homocysteine + H(+). Its function is as follows. Catalyzes the 2'-O-methylation at nucleotide C2498 in 23S rRNA. This Shewanella sp. (strain ANA-3) protein is Ribosomal RNA large subunit methyltransferase M.